Consider the following 331-residue polypeptide: Light-harvesting complex I LH35 proteins (331 aa).

The protein resides in the plastid. It is found in the chloroplast. In Euglena gracilis, this protein is Light-harvesting complex I LH35 proteins.